Reading from the N-terminus, the 419-residue chain is Serine/threonine-protein kinase Kist (419 aa).

The Protein kinase domain occupies 23 to 304 (WQVQSRLGSG…AEMALCSPFF (282 aa)). ATP-binding positions include 29-37 (LGSGSSASV) and K54. Active-site proton acceptor residues include D141 and D158. In terms of domain architecture, RRM spans 324–406 (RLLNVLDDDY…KFVVATFYPL (83 aa)).

This sequence belongs to the protein kinase superfamily. Ser/Thr protein kinase family. In terms of assembly, interacts with stathmin and CDKN1B/p27Kip1 Interacts with PAM. In terms of tissue distribution, in the embryo, preferentially expressed in the developing nervous system.

The protein localises to the cytoplasm. Its subcellular location is the nucleus. It catalyses the reaction L-seryl-[protein] + ATP = O-phospho-L-seryl-[protein] + ADP + H(+). It carries out the reaction L-threonyl-[protein] + ATP = O-phospho-L-threonyl-[protein] + ADP + H(+). Upon serum stimulation, phosphorylates CDKN1B/p27Kip1, thus controlling CDKN1B subcellular location and cell cycle progression in G1 phase. May be involved in trafficking and/or processing of RNA. The protein is Serine/threonine-protein kinase Kist (Uhmk1) of Rattus norvegicus (Rat).